The following is a 219-amino-acid chain: Tetratricopeptide repeat protein 9A (219 aa).

The disordered stretch occupies residues 1-49 (MERKGLAARSSGNPSPPALGEGPRPVPPPCVPSGGGAPERGQAGTAAEP). A TPR 1 repeat occupies 56-89 (AHEFKSQGAQCYKDKKFREAIGKYHRALLELKGL). A disordered region spans residues 94-115 (EERDARPASSAGVPKSSRLSEE). Residue S102 is modified to Phosphoserine. 2 TPR repeats span residues 125-160 (IDCYNSLAACLLQAELVNYERVKEYCLKVLKKEGEN) and 161-194 (FKALYRSGVAFYHLGDYDKALYYLKEARTRQPTD).

This sequence belongs to the TTC9 family.

The protein is Tetratricopeptide repeat protein 9A (Ttc9) of Mus musculus (Mouse).